Here is a 652-residue protein sequence, read N- to C-terminus: DNA ligase (652 aa).

Residues 30 to 34, 79 to 80, and Glu-108 contribute to the NAD(+) site; these read DEVYD and SL. Lys-110 serves as the catalytic N6-AMP-lysine intermediate. 4 residues coordinate NAD(+): Arg-131, Glu-165, Lys-280, and Lys-304. Cys-398, Cys-401, Cys-414, and Cys-419 together coordinate Zn(2+). Positions 574–652 constitute a BRCT domain; that stretch reads AKENPFKGKS…DEMRSKIEQA (79 aa).

The protein belongs to the NAD-dependent DNA ligase family. LigA subfamily. Requires Mg(2+) as cofactor. It depends on Mn(2+) as a cofactor.

It catalyses the reaction NAD(+) + (deoxyribonucleotide)n-3'-hydroxyl + 5'-phospho-(deoxyribonucleotide)m = (deoxyribonucleotide)n+m + AMP + beta-nicotinamide D-nucleotide.. Its function is as follows. DNA ligase that catalyzes the formation of phosphodiester linkages between 5'-phosphoryl and 3'-hydroxyl groups in double-stranded DNA using NAD as a coenzyme and as the energy source for the reaction. It is essential for DNA replication and repair of damaged DNA. This Sulfurimonas denitrificans (strain ATCC 33889 / DSM 1251) (Thiomicrospira denitrificans (strain ATCC 33889 / DSM 1251)) protein is DNA ligase.